A 240-amino-acid polypeptide reads, in one-letter code: UDP-2,3-diacylglucosamine hydrolase (240 aa).

Mn(2+) contacts are provided by Asp8, His10, Asp41, Asn79, and His114. Residue 79 to 80 participates in substrate binding; it reads NR. Residues Asp122, Ser160, Asn164, Lys167, and His195 each contribute to the substrate site. Positions 195 and 197 each coordinate Mn(2+).

It belongs to the LpxH family. It depends on Mn(2+) as a cofactor.

The protein resides in the cell inner membrane. It carries out the reaction UDP-2-N,3-O-bis[(3R)-3-hydroxytetradecanoyl]-alpha-D-glucosamine + H2O = 2-N,3-O-bis[(3R)-3-hydroxytetradecanoyl]-alpha-D-glucosaminyl 1-phosphate + UMP + 2 H(+). Its pathway is glycolipid biosynthesis; lipid IV(A) biosynthesis; lipid IV(A) from (3R)-3-hydroxytetradecanoyl-[acyl-carrier-protein] and UDP-N-acetyl-alpha-D-glucosamine: step 4/6. Hydrolyzes the pyrophosphate bond of UDP-2,3-diacylglucosamine to yield 2,3-diacylglucosamine 1-phosphate (lipid X) and UMP by catalyzing the attack of water at the alpha-P atom. Involved in the biosynthesis of lipid A, a phosphorylated glycolipid that anchors the lipopolysaccharide to the outer membrane of the cell. The protein is UDP-2,3-diacylglucosamine hydrolase of Serratia proteamaculans (strain 568).